Here is a 662-residue protein sequence, read N- to C-terminus: A-kinase anchor protein 10, mitochondrial (662 aa).

Residues M1–R28 constitute a mitochondrion transit peptide. Positions M1–K55 are disordered. Basic and acidic residues predominate over residues G32–S43. Phosphoserine occurs at positions 52 and 189. 2 consecutive RGS domains span residues T125–Q369 and Y379–L505. Residues S261–A280 show a composition bias toward polar residues. Residues S261–P282 form a disordered region. Phosphoserine is present on S281. A disordered region spans residues L524 to S548. The tract at residues L634–M647 is PKA-RII subunit binding.

It is found in the mitochondrion. The protein resides in the membrane. Its subcellular location is the cytoplasm. In terms of biological role, differentially targeted protein that binds to type I and II regulatory subunits of protein kinase A and anchors them to the mitochondria or the plasma membrane. Although the physiological relevance between PKA and AKAPS with mitochondria is not fully understood, one idea is that BAD, a proapoptotic member, is phosphorylated and inactivated by mitochondria-anchored PKA. It cannot be excluded too that it may facilitate PKA as well as G protein signal transduction, by acting as an adapter for assembling multiprotein complexes. With its RGS domain, it could lead to the interaction to G-alpha proteins, providing a link between the signaling machinery and the downstream kinase. This chain is A-kinase anchor protein 10, mitochondrial (AKAP10), found in Homo sapiens (Human).